We begin with the raw amino-acid sequence, 149 residues long: Ribosome maturation factor RimP (149 aa).

Belongs to the RimP family.

It is found in the cytoplasm. In terms of biological role, required for maturation of 30S ribosomal subunits. The chain is Ribosome maturation factor RimP from Sulfurimonas denitrificans (strain ATCC 33889 / DSM 1251) (Thiomicrospira denitrificans (strain ATCC 33889 / DSM 1251)).